Reading from the N-terminus, the 466-residue chain is Cysteine--tRNA ligase (466 aa).

C28 is a Zn(2+) binding site. The 'HIGH' region motif lies at P30–N40. Zn(2+)-binding residues include C208, H233, and E237. The short motif at K265–S269 is the 'KMSKS' region element. An ATP-binding site is contributed by K268.

The protein belongs to the class-I aminoacyl-tRNA synthetase family. Monomer. The cofactor is Zn(2+).

The protein resides in the cytoplasm. It catalyses the reaction tRNA(Cys) + L-cysteine + ATP = L-cysteinyl-tRNA(Cys) + AMP + diphosphate. The protein is Cysteine--tRNA ligase of Staphylococcus carnosus (strain TM300).